The sequence spans 94 residues: Pyrimidine/purine nucleoside phosphorylase (94 aa).

The protein belongs to the nucleoside phosphorylase PpnP family.

The catalysed reaction is a purine D-ribonucleoside + phosphate = a purine nucleobase + alpha-D-ribose 1-phosphate. The enzyme catalyses adenosine + phosphate = alpha-D-ribose 1-phosphate + adenine. It catalyses the reaction cytidine + phosphate = cytosine + alpha-D-ribose 1-phosphate. It carries out the reaction guanosine + phosphate = alpha-D-ribose 1-phosphate + guanine. The catalysed reaction is inosine + phosphate = alpha-D-ribose 1-phosphate + hypoxanthine. The enzyme catalyses thymidine + phosphate = 2-deoxy-alpha-D-ribose 1-phosphate + thymine. It catalyses the reaction uridine + phosphate = alpha-D-ribose 1-phosphate + uracil. It carries out the reaction xanthosine + phosphate = alpha-D-ribose 1-phosphate + xanthine. Functionally, catalyzes the phosphorolysis of diverse nucleosides, yielding D-ribose 1-phosphate and the respective free bases. Can use uridine, adenosine, guanosine, cytidine, thymidine, inosine and xanthosine as substrates. Also catalyzes the reverse reactions. In Pseudomonas fluorescens (strain ATCC BAA-477 / NRRL B-23932 / Pf-5), this protein is Pyrimidine/purine nucleoside phosphorylase.